The following is a 535-amino-acid chain: 3-hydroxyindolin-2-one monooxygenase (535 aa).

2 helical membrane passes run 14 to 34 (VVQCTPTQAAAVLGVLLLLAI) and 469 to 489 (ICAGATFAIATVEIMLANLIY). C470 contacts heme.

It belongs to the cytochrome P450 family. Requires heme as cofactor.

Its subcellular location is the membrane. The enzyme catalyses 3-hydroxyindolin-2-one + reduced [NADPH--hemoprotein reductase] + O2 = 2-hydroxy-2H-1,4-benzoxazin-3(4H)-one + oxidized [NADPH--hemoprotein reductase] + H2O + H(+). The protein operates within secondary metabolite biosynthesis; 2,4-dihydroxy-1,4-benzoxazin-3-one biosynthesis; 2,4-dihydroxy-1,4-benzoxazin-3-one from indoleglycerol phosphate: step 4/5. Functionally, catalyzes the conversion of 3-hydroxyindolin-2-one to 2-hydroxy-1,4-benzoxazin-3-one (HBOA). This is 3-hydroxyindolin-2-one monooxygenase (CYP71C1) from Zea mays (Maize).